We begin with the raw amino-acid sequence, 143 residues long: CRISPR-associated endoribonuclease Cas2 (143 aa).

D14 contributes to the Mg(2+) binding site.

Belongs to the CRISPR-associated endoribonuclease Cas2 protein family. As to quaternary structure, homodimer, forms a heterotetramer with a Cas1 homodimer. Requires Mg(2+) as cofactor.

Its function is as follows. CRISPR (clustered regularly interspaced short palindromic repeat), is an adaptive immune system that provides protection against mobile genetic elements (viruses, transposable elements and conjugative plasmids). CRISPR clusters contain sequences complementary to antecedent mobile elements and target invading nucleic acids. CRISPR clusters are transcribed and processed into CRISPR RNA (crRNA). Functions as a ssRNA-specific endoribonuclease. Involved in the integration of spacer DNA into the CRISPR cassette. This chain is CRISPR-associated endoribonuclease Cas2, found in Campylobacter jejuni subsp. jejuni serotype O:2 (strain ATCC 700819 / NCTC 11168).